The chain runs to 533 residues: MLAFPYLMTMITPPTFDVAFIGSGAACSMTLLEMADALLSSPSASPKLRIAVVERDEQFWCGIPYGQRSSIGSLAIQKLDDFADEPEKAAYRIWLEQNKQRWLAFFQAEGGAAAARWICDNRDALDGNQWGELYLPRFLFGVFLSEQMIAAIAALGERDLAEIVTIRAEAMSAHSADGHYRIGLRPSGNGPTAIAAGKVVVAIGSPPTKAILASDSEPAFTYINDFYSPGGESNVARLRDSLDRVESWEKRNVLVVGSNATSLEALYLMRHDARIRARVRSITVISRSGVLPYMICNQPPEFDFPRLRTLLCTEAIAAADLMSAIRDDLATAEERSLNLADLYDAVAALFGQALHKMDLVQQEEFFCVHGMNFTKLVRRAGRDCRQASEELAADGTLSLLAGEVLRVDACASGQPFATMTYRAAGAEHTHPVPFAAVVNCGGFEELDTCSSPFLVSAMQNGLCRPNRTNRGLLVNDDFEASPGFCVIGPLVGGNFTPKIRFWHVESAPRVRSLAKSLAASLLASLQPVALAPC.

Transmembrane regions (helical) follow at residues 1 to 21 (MLAF…VAFI), 135 to 155 (LPRF…IAAL), 193 to 213 (AIAA…AILA), and 472 to 492 (LLVN…PLVG).

It localises to the cell membrane. This is an uncharacterized protein from Mycobacterium bovis (strain ATCC BAA-935 / AF2122/97).